Reading from the N-terminus, the 606-residue chain is Protein spire homolog 2 (606 aa).

The KIND domain occupies 21-219 (LSLEEVLKSY…RALFLETLEL (199 aa)). Residues 147-181 (KHCGSNAAKDEGYSGQDEEEEEEEEEEEEGAGRGI) are disordered. Over residues 162–175 (QDEEEEEEEEEEEE) the composition is skewed to acidic residues. WH2 domains follow at residues 263–277 (QLMK…LKKV) and 357–374 (LHDR…LRPV). 2 disordered regions span residues 438-464 (DEDS…RSFS) and 517-537 (CRSL…ASHG). A compositionally biased stretch (basic and acidic residues) spans 445–464 (VDMRRVESSPTPLKRDRSFS). The spir-box stretch occupies residues 554–574 (LALTVDGVINVRRILVKAEME).

Belongs to the spire family.

The protein localises to the cytoplasm. Its subcellular location is the cytoskeleton. The protein resides in the cytosol. It is found in the cell membrane. It localises to the cytoplasmic vesicle membrane. Functionally, acts as an actin nucleation factor, remains associated with the slow-growing pointed end of the new filament. Involved in intracellular vesicle transport along actin fibers, providing a novel link between actin cytoskeleton dynamics and intracellular transport. Required for asymmetric spindle positioning and asymmetric cell division during oocyte meiosis. Required for normal formation of the cleavage furrow and for polar body extrusion during female germ cell meiosis. Also acts in the nucleus: together with SPIRE1 and SPIRE2, promotes assembly of nuclear actin filaments in response to DNA damage in order to facilitate movement of chromatin and repair factors after DNA damage. In Danio rerio (Zebrafish), this protein is Protein spire homolog 2 (spire2).